The following is a 420-amino-acid chain: uncharacterized protein (420 aa).

6 helical membrane passes run Ile-26–Ile-46, Ser-66–Phe-86, Val-231–Leu-251, Ile-276–Leu-296, Gly-317–Phe-337, and Ile-369–Ile-389.

This sequence belongs to the CbiQ family.

The protein localises to the cell membrane. This is an uncharacterized protein from Mycoplasma genitalium (strain ATCC 33530 / DSM 19775 / NCTC 10195 / G37) (Mycoplasmoides genitalium).